The primary structure comprises 119 residues: Fluoride-specific ion channel FluC 1 (119 aa).

Helical transmembrane passes span 2–22 (TGAV…GAVL), 37–57 (AGTL…TFAA), 62–82 (TMLL…SFSV), and 99–119 (HALG…LLVA). Na(+) contacts are provided by Gly-72 and Thr-75.

The protein belongs to the fluoride channel Fluc/FEX (TC 1.A.43) family.

Its subcellular location is the cell membrane. It catalyses the reaction fluoride(in) = fluoride(out). Na(+) is not transported, but it plays an essential structural role and its presence is essential for fluoride channel function. Functionally, fluoride-specific ion channel. Important for reducing fluoride concentration in the cell, thus reducing its toxicity. The protein is Fluoride-specific ion channel FluC 1 of Halobacterium salinarum (strain ATCC 700922 / JCM 11081 / NRC-1) (Halobacterium halobium).